The primary structure comprises 407 residues: Phosphoglycerate kinase (407 aa).

Substrate-binding positions include Asp24–Asn26, Arg40, His63–Arg66, Arg121, and Arg154. Residues Lys205, Glu337, and Gly363–Ser366 each bind ATP.

The protein belongs to the phosphoglycerate kinase family. As to quaternary structure, monomer.

The protein localises to the cytoplasm. The catalysed reaction is (2R)-3-phosphoglycerate + ATP = (2R)-3-phospho-glyceroyl phosphate + ADP. It participates in carbohydrate degradation; glycolysis; pyruvate from D-glyceraldehyde 3-phosphate: step 2/5. In Gloeobacter violaceus (strain ATCC 29082 / PCC 7421), this protein is Phosphoglycerate kinase.